The chain runs to 242 residues: ATP synthase subunit a, chloroplastic (242 aa).

5 helical membrane passes run 34-54 (GQVL…AVLG), 93-113 (VPFI…GAII), 132-152 (INTT…AGLS), 188-210 (LFGN…PLVI), and 222-242 (GSVQ…EALE).

It belongs to the ATPase A chain family. F-type ATPases have 2 components, CF(1) - the catalytic core - and CF(0) - the membrane proton channel. CF(1) has five subunits: alpha(3), beta(3), gamma(1), delta(1), epsilon(1). CF(0) has four main subunits: a, b, b' and c.

It localises to the plastid. It is found in the chloroplast thylakoid membrane. Functionally, key component of the proton channel; it plays a direct role in the translocation of protons across the membrane. The protein is ATP synthase subunit a, chloroplastic of Trieres chinensis (Marine centric diatom).